The primary structure comprises 254 residues: Rho-related protein racD (254 aa).

GTP is bound at residue 15-22 (GDGAVGKT). The Effector region motif lies at 37 to 45 (YVPTVFDNF). GTP is bound by residues 62–66 (DTAGQ) and 120–123 (TKTD). The span at 186–231 (AVTSPTSKSSGKSSPSSTSSKPSKTTTTTTTSSSSSSPPAASTAKP) shows a compositional bias: low complexity. The segment at 186 to 254 (AVTSPTSKSS…KDKDEKKPAK (69 aa)) is disordered. The segment covering 232 to 254 (AGEKKLSWGLFRKKDKDEKKPAK) has biased composition (basic and acidic residues).

The protein belongs to the small GTPase superfamily. Rho family.

In Dictyostelium discoideum (Social amoeba), this protein is Rho-related protein racD (racD).